Consider the following 151-residue polypeptide: Methylglyoxal synthase (151 aa).

Positions 6 to 151 (RVMPAHKHIA…DYDAYLAERV (146 aa)) constitute an MGS-like domain. Residues histidine 19, lysine 23, 45–48 (TGTT), and 65–66 (SG) each bind substrate. Aspartate 71 serves as the catalytic Proton donor/acceptor. A substrate-binding site is contributed by histidine 98.

This sequence belongs to the methylglyoxal synthase family.

The enzyme catalyses dihydroxyacetone phosphate = methylglyoxal + phosphate. Functionally, catalyzes the formation of methylglyoxal from dihydroxyacetone phosphate. The polypeptide is Methylglyoxal synthase (Aliivibrio fischeri (strain MJ11) (Vibrio fischeri)).